The sequence spans 419 residues: Thymidine phosphorylase (419 aa).

Belongs to the thymidine/pyrimidine-nucleoside phosphorylase family. As to quaternary structure, homodimer.

The catalysed reaction is thymidine + phosphate = 2-deoxy-alpha-D-ribose 1-phosphate + thymine. The enzymes which catalyze the reversible phosphorolysis of pyrimidine nucleosides are involved in the degradation of these compounds and in their utilization as carbon and energy sources, or in the rescue of pyrimidine bases for nucleotide synthesis. This Mycoplasmoides pirum (Mycoplasma pirum) protein is Thymidine phosphorylase (deoA).